The sequence spans 200 residues: Probable fatty acid desaturase MIMI_L630 (200 aa).

A run of 2 helical transmembrane segments spans residues 9–29 and 79–99; these read FIQI…YHWI and IGPL…FIMI.

Belongs to the fatty acid desaturase CarF family.

It localises to the membrane. The protein is Probable fatty acid desaturase MIMI_L630 of Acanthamoeba polyphaga mimivirus (APMV).